A 256-amino-acid polypeptide reads, in one-letter code: tRNA (guanine-N(7)-)-methyltransferase (256 aa).

Positions 1 to 43 are disordered; that stretch reads MDVDPVNSEMELDNKPTCETVPGLPQKKHYRQRAHSNPHSDHD. Positions 26–36 are enriched in basic residues; sequence QKKHYRQRAHS. S-adenosyl-L-methionine-binding positions include Gly74, 97–98, 132–133, and Leu152; these read EI and NA. Residue Asp155 is part of the active site. S-adenosyl-L-methionine is bound at residue 230–232; that stretch reads TEE.

Belongs to the class I-like SAM-binding methyltransferase superfamily. TrmB family.

It is found in the nucleus. It catalyses the reaction guanosine(46) in tRNA + S-adenosyl-L-methionine = N(7)-methylguanosine(46) in tRNA + S-adenosyl-L-homocysteine. It participates in tRNA modification; N(7)-methylguanine-tRNA biosynthesis. Catalyzes the formation of N(7)-methylguanine at position 46 (m7G46) in tRNA. The protein is tRNA (guanine-N(7)-)-methyltransferase of Caenorhabditis briggsae.